Here is a 30-residue protein sequence, read N- to C-terminus: Elongation factor 1-delta (30 aa).

The protein belongs to the EF-1-beta/EF-1-delta family. As to quaternary structure, EF-1 is composed of 4 subunits: alpha, beta (1B-alpha=beta'), delta (1B-beta), and gamma (1B-gamma).

Its function is as follows. EF-1-beta and EF-1-delta stimulate the exchange of GDP bound to EF-1-alpha to GTP. The chain is Elongation factor 1-delta from Populus euphratica (Euphrates poplar).